The primary structure comprises 317 residues: Probable cell division protein WhiA (317 aa).

Residues 275–308 (SLKELGEMLVPKVGKSGVNHRMRKIDELAEKLEE) constitute a DNA-binding region (H-T-H motif).

It belongs to the WhiA family.

In terms of biological role, involved in cell division and chromosome segregation. In Desulfitobacterium hafniense (strain Y51), this protein is Probable cell division protein WhiA.